A 451-amino-acid chain; its full sequence is Tubulin alpha chain (451 aa).

GTP is bound at residue Gln11. Lys40 carries the N6-acetyllysine modification. Glu71, Ser140, Gly144, Thr145, Thr179, Asn206, and Asn228 together coordinate GTP. A Mg(2+)-binding site is contributed by Glu71. Residue Glu254 is part of the active site.

It belongs to the tubulin family. Dimer of alpha and beta chains. A typical microtubule is a hollow water-filled tube with an outer diameter of 25 nm and an inner diameter of 15 nM. Alpha-beta heterodimers associate head-to-tail to form protofilaments running lengthwise along the microtubule wall with the beta-tubulin subunit facing the microtubule plus end conferring a structural polarity. Microtubules usually have 13 protofilaments but different protofilament numbers can be found in some organisms and specialized cells. Mg(2+) is required as a cofactor. Undergoes a tyrosination/detyrosination cycle, the cyclic removal and re-addition of a C-terminal tyrosine residue by the enzymes tubulin tyrosine carboxypeptidase (TTCP) and tubulin tyrosine ligase (TTL), respectively. Post-translationally, acetylation of alpha chains at Lys-40 stabilizes microtubules and affects affinity and processivity of microtubule motors. This modification has a role in multiple cellular functions, ranging from cell motility, cell cycle progression or cell differentiation to intracellular trafficking and signaling. As to expression, actively expressed in the lens but does not seem to be lens-specific.

It localises to the cytoplasm. The protein localises to the cytoskeleton. The catalysed reaction is GTP + H2O = GDP + phosphate + H(+). Its function is as follows. Tubulin is the major constituent of microtubules, a cylinder consisting of laterally associated linear protofilaments composed of alpha- and beta-tubulin heterodimers. Microtubules grow by the addition of GTP-tubulin dimers to the microtubule end, where a stabilizing cap forms. Below the cap, tubulin dimers are in GDP-bound state, owing to GTPase activity of alpha-tubulin. This Enteroctopus dofleini (North Pacific giant octopus) protein is Tubulin alpha chain.